A 700-amino-acid polypeptide reads, in one-letter code: Peroxisomal acyl-coenzyme A oxidase 3 (700 aa).

Ala-2 bears the N-acetylalanine mark. Thr-281 carries the phosphothreonine modification. Positions 698-700 match the Microbody targeting signal motif; the sequence is SKL.

The protein belongs to the acyl-CoA oxidase family. Requires FAD as cofactor.

It is found in the peroxisome. It carries out the reaction a 2,3-saturated acyl-CoA + O2 = a (2E)-enoyl-CoA + H2O2. The enzyme catalyses (2S)-pristanoyl-CoA + O2 = (2E)-pristenoyl-CoA + H2O2. The catalysed reaction is tetracosanoyl-CoA + O2 = (2E)-tetracosenoyl-CoA + H2O2. It catalyses the reaction hexadecanoyl-CoA + O2 = (2E)-hexadecenoyl-CoA + H2O2. It carries out the reaction hexadecanedioyl-CoA + O2 = (2E)-hexadecenedioyl-CoA + H2O2. The protein operates within lipid metabolism; peroxisomal fatty acid beta-oxidation. Its function is as follows. Oxidizes the CoA-esters of 2-methyl-branched fatty acids. The polypeptide is Peroxisomal acyl-coenzyme A oxidase 3 (ACOX3) (Homo sapiens (Human)).